A 252-amino-acid polypeptide reads, in one-letter code: 2-succinyl-6-hydroxy-2,4-cyclohexadiene-1-carboxylate synthase (252 aa).

This sequence belongs to the AB hydrolase superfamily. MenH family. Monomer.

It catalyses the reaction 5-enolpyruvoyl-6-hydroxy-2-succinyl-cyclohex-3-ene-1-carboxylate = (1R,6R)-6-hydroxy-2-succinyl-cyclohexa-2,4-diene-1-carboxylate + pyruvate. It functions in the pathway quinol/quinone metabolism; 1,4-dihydroxy-2-naphthoate biosynthesis; 1,4-dihydroxy-2-naphthoate from chorismate: step 3/7. The protein operates within quinol/quinone metabolism; menaquinone biosynthesis. Functionally, catalyzes a proton abstraction reaction that results in 2,5-elimination of pyruvate from 2-succinyl-5-enolpyruvyl-6-hydroxy-3-cyclohexene-1-carboxylate (SEPHCHC) and the formation of 2-succinyl-6-hydroxy-2,4-cyclohexadiene-1-carboxylate (SHCHC). In Salmonella paratyphi B (strain ATCC BAA-1250 / SPB7), this protein is 2-succinyl-6-hydroxy-2,4-cyclohexadiene-1-carboxylate synthase.